Here is a 113-residue protein sequence, read N- to C-terminus: Large ribosomal subunit protein uL22 (113 aa).

Belongs to the universal ribosomal protein uL22 family. Part of the 50S ribosomal subunit.

In terms of biological role, this protein binds specifically to 23S rRNA; its binding is stimulated by other ribosomal proteins, e.g. L4, L17, and L20. It is important during the early stages of 50S assembly. It makes multiple contacts with different domains of the 23S rRNA in the assembled 50S subunit and ribosome. Its function is as follows. The globular domain of the protein is located near the polypeptide exit tunnel on the outside of the subunit, while an extended beta-hairpin is found that lines the wall of the exit tunnel in the center of the 70S ribosome. This is Large ribosomal subunit protein uL22 from Magnetococcus marinus (strain ATCC BAA-1437 / JCM 17883 / MC-1).